The chain runs to 1135 residues: DNA-directed RNA polymerase I subunit RPA2 (1135 aa).

The tract at residues Met1 to Tyr24 is disordered. Arg180 provides a ligand contact to RNA. Residues Ile194 to Tyr208 are loop B. The segment at Leu236–Leu247 is loop A. An RNA-binding site is contributed by Asp367. 2 fork loop regions span residues Leu439–Leu453 and Arg474–Leu489. Residue Asp755 coordinates Mg(2+). Lys890 provides a ligand contact to RNA. The DNA site is built by Arg1020 and Arg1036. Ser1051 is subject to Phosphoserine. The Zn(2+) site is built by Cys1070, Cys1073, Cys1098, and Cys1101. The C4-type zinc finger occupies Cys1070 to Cys1101.

This sequence belongs to the RNA polymerase beta chain family. In terms of assembly, component of the RNA polymerase I (Pol I) complex consisting of 13 subunits: a ten-subunit catalytic core composed of POLR1A/RPA1, POLR1B/RPA2, POLR1C/RPAC1, POLR1D/RPAC2, POLR1H/RPA12, POLR2E/RPABC1, POLR2F/RPABC2, POLR2H/RPABC3, POLR2K/RPABC4 and POLR2L/RPABC5; a mobile stalk subunit POLR1F/RPA43 protruding from the core and additional subunits homologous to general transcription factors POLR1E/RPA49 and POLR1G/RPA34. Part of Pol I pre-initiation complex (PIC), in which Pol I core assembles with RRN3 and promoter-bound UTBF and SL1/TIF-IB complex. The cofactor is Mg(2+).

The protein localises to the nucleus. Its subcellular location is the nucleolus. It is found in the chromosome. The enzyme catalyses RNA(n) + a ribonucleoside 5'-triphosphate = RNA(n+1) + diphosphate. In terms of biological role, catalytic core component of RNA polymerase I (Pol I), a DNA-dependent RNA polymerase which synthesizes ribosomal RNA precursors using the four ribonucleoside triphosphates as substrates. Transcribes 47S pre-rRNAs from multicopy rRNA gene clusters, giving rise to 5.8S, 18S and 28S ribosomal RNAs. Pol I-mediated transcription cycle proceeds through transcription initiation, transcription elongation and transcription termination stages. During transcription initiation, Pol I pre-initiation complex (PIC) is recruited by the selectivity factor 1 (SL1/TIF-IB) complex bound to the core promoter that precedes an rDNA repeat unit. The PIC assembly bends the promoter favoring the formation of the transcription bubble and promoter escape. Once the polymerase has escaped from the promoter it enters the elongation phase during which RNA is actively polymerized, based on complementarity with the template DNA strand. Highly processive, assembles in structures referred to as 'Miller trees' where many elongating Pol I complexes queue and transcribe the same rDNA coding regions. At terminator sequences downstream of the rDNA gene, PTRF interacts with Pol I and halts Pol I transcription leading to the release of the RNA transcript and polymerase from the DNA. Forms Pol I active center together with the largest subunit POLR1A/RPA1. Appends one nucleotide at a time to the 3' end of the nascent RNA, with POLR1A/RPA1 contributing a Mg(2+)-coordinating DxDGD motif, and POLR1B/RPA2 participating in the coordination of a second Mg(2+) ion and providing lysine residues believed to facilitate Watson-Crick base pairing between the incoming nucleotide and the template base. Typically, Mg(2+) ions direct a 5' nucleoside triphosphate to form a phosphodiester bond with the 3' hydroxyl of the preceding nucleotide of the nascent RNA, with the elimination of pyrophosphate. Has proofreading activity: Pauses and backtracks to allow the cleavage of a missincorporated nucleotide via POLR1H/RPA12. High Pol I processivity is associated with decreased transcription fidelity. The protein is DNA-directed RNA polymerase I subunit RPA2 of Homo sapiens (Human).